The following is a 101-amino-acid chain: Growth-regulated alpha protein (101 aa).

An N-terminal signal peptide occupies residues 1 to 28; it reads MAPATRSLLRAPLLLLLLLLATSRLATG. Intrachain disulfides connect Cys-37–Cys-63 and Cys-39–Cys-79.

The protein belongs to the intercrine alpha (chemokine CxC) family.

The protein localises to the secreted. In terms of biological role, has chemotactic activity for neutrophils. This chain is Growth-regulated alpha protein (CXCL1), found in Cricetulus griseus (Chinese hamster).